The following is a 915-amino-acid chain: WD repeat-containing protein 44 (915 aa).

Residues 1–14 (MASESDTEEFYDAP) show a composition bias toward acidic residues. The tract at residues 1-24 (MASESDTEEFYDAPEDVHLGTGYP) is disordered. Position 2 is an N-acetylalanine (A2). The binding activity stretch occupies residues 2-173 (ASESDTEEFY…SSGEQLDASG (172 aa)). S3 is subject to Phosphoserine. The FFAT-like motif signature appears at 9–15 (EFYDAPE). Phosphotyrosine is present on Y11. Phosphoserine occurs at positions 27, 50, 66, 71, 81, and 126. Disordered regions lie at residues 79 to 102 (DDSL…VAGT), 117 to 174 (LQQD…ASGL), and 208 to 282 (VEEV…PKEN). Residues 114-139 (EHELQQDSEKAESQNVAEESELETQK) are a coiled coil. Residues 146-155 (TCEKSEKTVD) show a composition bias toward basic and acidic residues. 2 positions are modified to phosphothreonine: T161 and T221. The important for interaction with ARHGAP26 AND ARHGAP10 stretch occupies residues 213-259 (PAKPPRHLTPEPDIVASTKKPVPARPPPPTNFPPPRPPPPSRPAPPP). Pro residues predominate over residues 235–258 (PARPPPPTNFPPPRPPPPSRPAPP). Position 264 is a phosphoserine (S264). The segment covering 264 to 280 (SELEFEALKTPDLDVPK) has biased composition (basic and acidic residues). At T273 the chain carries Phosphothreonine. The interval 336 to 349 (VMGPQRPRSNSGRE) is important for interaction with RAB11A. S344 and S346 each carry phosphoserine. A phosphothreonine mark is found at T351 and T403. Disordered stretches follow at residues 399-425 (SNDA…RLKQ) and 461-481 (DEVF…GMPY). Phosphoserine is present on residues S405, S472, S473, and S474. Over residues 469-478 (DDPSSSDDEG) the composition is skewed to acidic residues. Y481 is modified (phosphotyrosine). The WD 1 repeat unit spans residues 511–550 (EHMGAVWTMKFSHCGRLLASAGQDNIVRIWALKNAFDYFN). The tract at residues 559 to 593 (EGRVSPSPSQESLSSSKSDTDMGVCSGTDEDPDDK) is disordered. Phosphoserine occurs at positions 563 and 567. Low complexity predominate over residues 563–575 (SPSPSQESLSSSK). 7 WD repeats span residues 607–645 (GHTA…CLCC), 647–687 (QHID…VALW), 692–731 (GQTK…YHTQ), 742–781 (KVGR…LSMK), 786–825 (VNSS…SKFT), 840–880 (AHNA…EVLD), and 882–915 (TSTG…KTVS).

Interacts with the GTP-bound form of RAB11 when membrane-associated. Interacts with GRAF1/ARHGAP26 or GRAF2/ARHGAP10; the interaction connects the endoplasmic reticulum (ER) with the endosomal tubule. Interacts (via FFAT-like motif) with VAPA (via MSP domain) or VAPB (via MSP domain); the interaction connects the ER with the endosomal tubule. Does not bind to other Rab and Rho small G proteins. In terms of processing, phosphorylated by ATK1; the phosphorylation stabilizes its interaction with RAB11A and RAB11B.

Its subcellular location is the cytoplasm. It is found in the cytosol. The protein resides in the perinuclear region. The protein localises to the endosome membrane. It localises to the golgi apparatus. Its subcellular location is the trans-Golgi network. In terms of biological role, downstream effector for Rab11 which regulates Rab11 intracellular membrane trafficking functions such as endocytic recycling, intracellular ciliogenesis and protein export. ATK1-mediated phosphorylation of WDR44 induces binding to Rab11 which activates endocytic recycling of transferrin receptor back to the plasma membrane. When bound to Rab11, prevents the formation of the ciliogenic Rab11-Rabin8/RAB3IP-RAB11FIP3 complex, therefore inhibiting preciliary trafficking and ciliogenesis. Participates in neo-synthesized protein export by connecting the endoplasmic reticulum (ER) with the endosomal tubule via direct interactions with the integral ER proteins VAPA or VAPB and the endosomal protein GRAFs (GRAF1/ARHGAP26 or GRAF2/ARHGAP10), which facilitates the transfer of proteins such as E-cadherin, MPP14 and CFTR into a Rab8-Rab10-Rab11-dependent export route. This Mus musculus (Mouse) protein is WD repeat-containing protein 44.